The primary structure comprises 435 residues: ATP-dependent protease ATPase subunit HslU (435 aa).

Residues Val18, 60-65 (GCGKTE), Asp248, Glu313, and Arg385 contribute to the ATP site.

It belongs to the ClpX chaperone family. HslU subfamily. As to quaternary structure, a double ring-shaped homohexamer of HslV is capped on each side by a ring-shaped HslU homohexamer. The assembly of the HslU/HslV complex is dependent on binding of ATP.

It is found in the cytoplasm. Its function is as follows. ATPase subunit of a proteasome-like degradation complex; this subunit has chaperone activity. The binding of ATP and its subsequent hydrolysis by HslU are essential for unfolding of protein substrates subsequently hydrolyzed by HslV. HslU recognizes the N-terminal part of its protein substrates and unfolds these before they are guided to HslV for hydrolysis. The chain is ATP-dependent protease ATPase subunit HslU from Beijerinckia indica subsp. indica (strain ATCC 9039 / DSM 1715 / NCIMB 8712).